A 363-amino-acid polypeptide reads, in one-letter code: GDSL esterase/lipase At1g29670 (363 aa).

Positions 1-24 (MESYLTKWCVVLVLLCFGFSVVKA) are cleaved as a signal peptide. Ser-39 serves as the catalytic Nucleophile. Residues Asp-327 and His-330 contribute to the active site.

This sequence belongs to the 'GDSL' lipolytic enzyme family.

The protein resides in the secreted. The polypeptide is GDSL esterase/lipase At1g29670 (Arabidopsis thaliana (Mouse-ear cress)).